The chain runs to 320 residues: ATP-dependent 6-phosphofructokinase (320 aa).

Position 11 (G11) interacts with ATP. 21–25 (RAVVR) contributes to the ADP binding site. Residues 72-73 (RY) and 102-105 (GDGS) each bind ATP. Mg(2+) is bound at residue D103. A substrate-binding site is contributed by 125-127 (TID). D127 functions as the Proton acceptor in the catalytic mechanism. R154 lines the ADP pocket. Residues R162 and 169 to 171 (MGR) contribute to the substrate site. ADP-binding positions include 185–187 (GAD), R211, and 213–215 (KKH). Substrate contacts are provided by residues E222, R243, and 249–252 (HVVR).

This sequence belongs to the phosphofructokinase type A (PFKA) family. ATP-dependent PFK group I subfamily. Prokaryotic clade 'B1' sub-subfamily. In terms of assembly, homotetramer. It depends on Mg(2+) as a cofactor.

The protein localises to the cytoplasm. It catalyses the reaction beta-D-fructose 6-phosphate + ATP = beta-D-fructose 1,6-bisphosphate + ADP + H(+). Its pathway is carbohydrate degradation; glycolysis; D-glyceraldehyde 3-phosphate and glycerone phosphate from D-glucose: step 3/4. Its activity is regulated as follows. Allosterically activated by ADP and other diphosphonucleosides, and allosterically inhibited by phosphoenolpyruvate. Functionally, catalyzes the phosphorylation of D-fructose 6-phosphate to fructose 1,6-bisphosphate by ATP, the first committing step of glycolysis. This Enterococcus faecalis (strain ATCC 700802 / V583) protein is ATP-dependent 6-phosphofructokinase.